We begin with the raw amino-acid sequence, 163 residues long: uncharacterized protein (163 aa).

Positions 144–163 are disordered; it reads WSHSQSQLGTPGRGKGALGF. Positions 154–163 are enriched in gly residues; the sequence is PGRGKGALGF.

This is an uncharacterized protein from Homo sapiens (Human).